We begin with the raw amino-acid sequence, 474 residues long: Gamma-aminobutyric acid receptor subunit beta-2 (474 aa).

The N-terminal stretch at 1-25 is a signal peptide; the sequence is MWRVRKRGYFGIWSFPLIIAAVCAQ. Residues 26–244 are Extracellular-facing; the sequence is SVNDPSNMSL…SFKLKRNIGY (219 aa). 2 N-linked (GlcNAc...) asparagine glycosylation sites follow: N32 and N104. Residue Y121 participates in histamine binding. A disulfide bond links C160 and C174. The N-linked (GlcNAc...) asparagine glycan is linked to N173. Histamine-binding positions include 180–181 and T226; that span reads SY. Positions 181 and 226 each coordinate 4-aminobutanoate. 3 helical membrane-spanning segments follow: residues 245–266, 270–292, and 304–326; these read FILQ…SFWI, ASAA…NTHL, and AIDM…YALV. Over 327 to 451 the chain is Cytoplasmic; the sequence is NYIFFGRGPQ…DLTDVNAIDR (125 aa). A Phosphotyrosine modification is found at Y403. A helical transmembrane segment spans residues 452-473; sequence WSRIFFPVVFSFFNIVYWLYYV.

Belongs to the ligand-gated ion channel (TC 1.A.9) family. Gamma-aminobutyric acid receptor (TC 1.A.9.5) subfamily. GABRB2 sub-subfamily. As to quaternary structure, heteropentamer, formed by a combination of alpha (GABRA1-6), beta (GABRB1-3), gamma (GABRG1-3), delta (GABRD), epsilon (GABRE), rho (GABRR1-3), pi (GABRP) and theta (GABRQ) chains, each subunit exhibiting distinct physiological and pharmacological properties. Interacts with UBQLN1. May interact with KIF21B. Identified in a complex of 720 kDa composed of LHFPL4, NLGN2, GABRA1, GABRB2, GABRG2 and GABRB3. Post-translationally, glycosylated. As to expression, expressed in brain (at protein level), in cerebellar granule cells. Expressed in lungs, in alveolar epithelium.

It is found in the postsynaptic cell membrane. The protein localises to the cell membrane. Its subcellular location is the cytoplasmic vesicle membrane. It carries out the reaction chloride(in) = chloride(out). Its activity is regulated as follows. Allosterically activated by benzodiazepines and the anesthetic etomidate. Inhibited by the antagonist bicuculline. Potentiated by histamine. Functionally, beta subunit of the heteropentameric ligand-gated chloride channel gated by gamma-aminobutyric acid (GABA), a major inhibitory neurotransmitter in the brain. GABA-gated chloride channels, also named GABA(A) receptors (GABAAR), consist of five subunits arranged around a central pore and contain GABA active binding site(s) located at the alpha and beta subunit interface(s). When activated by GABA, GABAARs selectively allow the flow of chloride anions across the cell membrane down their electrochemical gradient. Chloride influx into the postsynaptic neuron following GABAAR opening decreases the neuron ability to generate a new action potential, thereby reducing nerve transmission. GABAARs containing alpha-1 and beta-2 or -3 subunits exhibit synaptogenic activity; the gamma-2 subunit being necessary but not sufficient to induce rapid synaptic contacts formation. Extrasynaptic beta-2 receptors contribute to the tonic GABAergic inhibition. Beta-containing GABAARs can simultaneously bind GABA and histamine where histamine binds at the interface of two neighboring beta subunits, which may be involved in the regulation of sleep and wakefulness. This Rattus norvegicus (Rat) protein is Gamma-aminobutyric acid receptor subunit beta-2.